A 78-amino-acid polypeptide reads, in one-letter code: MSCCGGKCGCGSSCSCGSGCGGCGMYPDLSYSEMTTTETLIVGVAPQKTYFEGSEMGVAAENGCKCGSDCKCDPCTCK.

This sequence belongs to the metallothionein superfamily. Type 15 family.

In terms of biological role, metallothioneins have a high content of cysteine residues that bind various heavy metals. The polypeptide is Metallothionein-like protein type 2 (Actinidia deliciosa (Kiwi)).